Reading from the N-terminus, the 679-residue chain is MISASRAAAARLVGTTASRSPAAARHQDGWNGLSHEAFRFVSRRDYASEAIKGAVVGIDLGTTNSCVAVMEGKQAKVLENAEGARTTPSVVAFTPDGERLVGMPAKRQAVTNPNNTFYATKRLIGRRYDDPEVQKDTKNVPFKIVRASNGDAWVEAHGKLYSPSQIGAFVLMKMKETAENYLGHTAKNAVITVPAYFNDSQRQATKDAGQISGLNVLRVINEPTAAALAYGLDKSEDKVIAVYDLGGGTFDISILEIQKGVFEVKSTNGDTFLGGEDFDQALLRHIVKEFKRETGVDLTKDNMALQRVREAAEKAKCELSSSVQTDINLPYLTMDASGPKHLNMKLTRAQFEGIVTDLIKRTIAPCQKAMQDAEVSKSDIGEVILVGGMTRMPKVQQTVQDLFGRAPSKAVNPDEAVAIGAAIQGGVLAGDVTDVLLLDVTPLSLGIETLGGVFTKLINRNTTIPTKKSQVFSTAADGQTQVEIKVCQGEREMAGDNKLLGQFTLIGIPPAPRGVPQIEVTFDIDANGIVHVSAKDKGTGREQQIVIQSSGGLSKDDIENMVKNAEKYAEEDRRKKERVEAVNMAEGIIHDTETKMEEFKDQLPADECNKLKEEISKMRELLARKDSETGENIRQAASSLQQASLKLFEMAYKKMASEREGSGSSSTGEQKEDQKEEKQ.

The transit peptide at 1–46 directs the protein to the mitochondrion; the sequence is MISASRAAAARLVGTTASRSPAAARHQDGWNGLSHEAFRFVSRRDY. The tract at residues 1–432 is interaction with NFS1; the sequence is MISASRAAAA…IQGGVLAGDV (432 aa). ADP-binding residues include Thr63 and Asn64. The nucleotide-binding domain (NBD) stretch occupies residues 63-431; sequence TNSCVAVMEG…AIQGGVLAGD (369 aa). At Lys76 the chain carries N6-acetyllysine. Phosphothreonine is present on Thr87. Lys135 and Lys138 each carry N6-acetyllysine; alternate. Residues Lys135 and Lys138 each carry the N6-succinyllysine; alternate modification. Lys143 bears the N6-acetyllysine mark. Lys206 bears the N6-acetyllysine; alternate mark. At Lys206 the chain carries N6-succinyllysine; alternate. Residue Lys206 is modified to N6-malonyllysine; alternate. An N6-acetyllysine mark is found at Lys234 and Lys288. The residue at position 300 (Lys300) is an N6-acetyllysine; alternate. The residue at position 300 (Lys300) is an N6-succinyllysine; alternate. ADP contacts are provided by Glu313, Lys316, and Ser320. N6-acetyllysine; alternate is present on Lys360. The residue at position 360 (Lys360) is an N6-succinyllysine; alternate. Lys368 bears the N6-succinyllysine mark. Residues Gly388 and Arg391 each coordinate ADP. Lys394 bears the N6-succinyllysine mark. Ser408 is subject to Phosphoserine. Residues 432–441 are interdomain linker; the sequence is VTDVLLLDVT. The interaction with FXN and ISCU stretch occupies residues 432 to 679; it reads VTDVLLLDVT…QKEDQKEEKQ (248 aa). The segment at 442-679 is substrate-binding domain (SBD); that stretch reads PLSLGIETLG…QKEDQKEEKQ (238 aa). Arg513 carries the omega-N-methylarginine modification. An N6-acetyllysine; alternate mark is found at Lys567 and Lys600. 2 positions are modified to N6-succinyllysine; alternate: Lys567 and Lys600. Position 610 is an N6-succinyllysine (Lys610). N6-acetyllysine is present on Lys612. An N6-acetyllysine; alternate modification is found at Lys646. Lys646 carries the N6-succinyllysine; alternate modification. The interval 655 to 679 is disordered; sequence MASEREGSGSSSTGEQKEDQKEEKQ. Positions 669 to 679 are enriched in basic and acidic residues; that stretch reads EQKEDQKEEKQ.

It belongs to the heat shock protein 70 family. Interacts strongly with the intermediate form of FXN and weakly with its mature form. Interacts with HSCB. Associates with the mitochondrial contact site and cristae organizing system (MICOS) complex, composed of at least MICOS10/MIC10, CHCHD3/MIC19, CHCHD6/MIC25, APOOL/MIC27, IMMT/MIC60, APOO/MIC23/MIC26 and QIL1/MIC13. This complex was also known under the names MINOS or MitOS complex. The MICOS complex associates with mitochondrial outer membrane proteins SAMM50, MTX1, MTX2 and DNAJC11, mitochondrial inner membrane protein TMEM11 and with HSPA9. Interacts with DNLZ, the interaction is required to prevent self-aggregation. Interacts with TESPA1. Interacts with PDPN. Interacts with NFU1, NFS1 and ISCU. Interacts with TP53; the interaction promotes TP53 degradation. Interacts (via SBD domain) with UBXN2A; the interaction with UBXN2A inhibits HSPA9 interaction with and degradation of TP53, thereby promotes TP53 translocation to the nucleus. Interacts with ITPR1 AND VDAC1; this interaction couples ITPR1 to VDAC1. Component of the TIM23 mitochondrial inner membrane pre-sequence translocase complex.

It localises to the mitochondrion. The protein resides in the nucleus. Its subcellular location is the nucleolus. The protein localises to the cytoplasm. It is found in the mitochondrion matrix. It catalyses the reaction ATP + H2O = ADP + phosphate + H(+). With respect to regulation, the chaperone activity is regulated by ATP-induced allosteric coupling of the nucleotide-binding (NBD) and substrate-binding (SBD) domains. ATP binding in the nucleotide-binding pocket (NBP) leads to a conformational change in the NBD, which is transferred through the interdomain linker (IDL) to the substrate-binding domain (SBD). This elicits a reduced substrate affinity and a faster substrate exchange rate. Upon hydrolysis of ATP to ADP, the protein undergoes a conformational change that increases its affinity for substrate proteins. It cycles through repeated phases of ATP hydrolysis and nucleotide exchange, facilitating repeated cycles of substrate binding and release. Functions in collaboration with co-chaperones. Functions with the co-chaperone, DNLZ, to maintain solubility and regulate ATP hydrolysis. Nucleotide exchange factors, GRPEL1 and GRPEL2, accelerate nucleotide exchange. Functionally, mitochondrial chaperone that plays a key role in mitochondrial protein import, folding, and assembly. Plays an essential role in the protein quality control system, the correct folding of proteins, the re-folding of misfolded proteins, and the targeting of proteins for subsequent degradation. These processes are achieved through cycles of ATP binding, ATP hydrolysis, and ADP release, mediated by co-chaperones. In mitochondria, it associates with the TIM (translocase of the inner membrane) protein complex to assist in the import and folding of mitochondrial proteins. Plays an important role in mitochondrial iron-sulfur cluster (ISC) biogenesis, interacts with and stabilizes ISC cluster assembly proteins FXN, NFU1, NFS1 and ISCU. Regulates erythropoiesis via stabilization of ISC assembly. Regulates mitochondrial calcium-dependent apoptosis by coupling two calcium channels, ITPR1 and VDAC1, at the mitochondria-associated endoplasmic reticulum (ER) membrane to facilitate calcium transport from the ER lumen to the mitochondria intermembrane space, providing calcium for the downstream calcium channel MCU, which releases it into the mitochondrial matrix. Although primarily located in the mitochondria, it is also found in other cellular compartments. In the cytosol, it associates with proteins involved in signaling, apoptosis, or senescence. It may play a role in cell cycle regulation via its interaction with and promotion of degradation of TP53. May play a role in the control of cell proliferation and cellular aging. Protects against reactive oxygen species (ROS). Extracellular HSPA9 plays a cytoprotective role by preventing cell lysis following immune attack by the membrane attack complex by disrupting formation of the complex. The sequence is that of Stress-70 protein, mitochondrial from Rattus norvegicus (Rat).